Here is a 553-residue protein sequence, read N- to C-terminus: HTH-type transcriptional regulator SgrR (553 aa).

The HTH marR-type domain maps to 1–113; that stretch reads MSTSRLQQQF…RQMLLSQLGR (113 aa). The segment at residues 26-49 is a DNA-binding region (H-T-H motif); that stretch reads LQALAEVLNCSRRHVRSLLGKMQH. Positions 163–494 are solute-binding; sequence ELEPDLSHHW…EELHQDIESW (332 aa).

Its function is as follows. Activates the small RNA gene sgrS under glucose-phosphate stress conditions as well as yfdZ. Represses its own transcription under both stress and non-stress conditions. Might act as a sensor of the intracellular accumulation of phosphoglucose by binding these molecules in its C-terminal solute-binding domain. This Yersinia pseudotuberculosis serotype I (strain IP32953) protein is HTH-type transcriptional regulator SgrR.